A 329-amino-acid chain; its full sequence is NTD biosynthesis operon regulator NtdR (329 aa).

In terms of domain architecture, HTH lacI-type spans proline 2–arginine 56. The H-T-H motif DNA-binding region spans isoleucine 4–asparagine 23.

Its function is as follows. Positively regulates the ntdABC operon and negatively regulates its own transcription. Binds to NTD to induce ntdABC transcription. This Bacillus subtilis (strain 168) protein is NTD biosynthesis operon regulator NtdR (ntdR).